The chain runs to 338 residues: Lipoate-protein ligase A (338 aa).

Residues 29-216 (PATQRVLFLW…AFFAHYGERV (188 aa)) form the BPL/LPL catalytic domain. ATP contacts are provided by residues Arg71, 76 to 79 (GAVF), and Lys134. Lys134 serves as a coordination point for (R)-lipoate.

The protein belongs to the LplA family. As to quaternary structure, monomer.

It is found in the cytoplasm. It catalyses the reaction L-lysyl-[lipoyl-carrier protein] + (R)-lipoate + ATP = N(6)-[(R)-lipoyl]-L-lysyl-[lipoyl-carrier protein] + AMP + diphosphate + H(+). It functions in the pathway protein modification; protein lipoylation via exogenous pathway; protein N(6)-(lipoyl)lysine from lipoate: step 1/2. Its pathway is protein modification; protein lipoylation via exogenous pathway; protein N(6)-(lipoyl)lysine from lipoate: step 2/2. Catalyzes both the ATP-dependent activation of exogenously supplied lipoate to lipoyl-AMP and the transfer of the activated lipoyl onto the lipoyl domains of lipoate-dependent enzymes. In Salmonella paratyphi B (strain ATCC BAA-1250 / SPB7), this protein is Lipoate-protein ligase A.